The sequence spans 395 residues: Acetate kinase (395 aa).

N7 is a binding site for Mg(2+). Residue K14 coordinates ATP. Residue R85 participates in substrate binding. D142 functions as the Proton donor/acceptor in the catalytic mechanism. Residues 202–206, 277–279, and 325–329 each bind ATP; these read HLGNG, DMR, and GIGEN. E378 contacts Mg(2+).

It belongs to the acetokinase family. In terms of assembly, homodimer. The cofactor is Mg(2+). Mn(2+) is required as a cofactor.

The protein localises to the cytoplasm. The enzyme catalyses acetate + ATP = acetyl phosphate + ADP. Its pathway is metabolic intermediate biosynthesis; acetyl-CoA biosynthesis; acetyl-CoA from acetate: step 1/2. Its function is as follows. Catalyzes the formation of acetyl phosphate from acetate and ATP. Can also catalyze the reverse reaction. The protein is Acetate kinase of Deinococcus geothermalis (strain DSM 11300 / CIP 105573 / AG-3a).